We begin with the raw amino-acid sequence, 125 residues long: Large ribosomal subunit protein bL12 (125 aa).

This sequence belongs to the bacterial ribosomal protein bL12 family. Homodimer. Part of the ribosomal stalk of the 50S ribosomal subunit. Forms a multimeric L10(L12)X complex, where L10 forms an elongated spine to which 2 to 4 L12 dimers bind in a sequential fashion. Binds GTP-bound translation factors.

Functionally, forms part of the ribosomal stalk which helps the ribosome interact with GTP-bound translation factors. Is thus essential for accurate translation. The polypeptide is Large ribosomal subunit protein bL12 (Campylobacter jejuni subsp. jejuni serotype O:2 (strain ATCC 700819 / NCTC 11168)).